Here is a 387-residue protein sequence, read N- to C-terminus: Alpha-maltose-1-phosphate synthase (387 aa).

It belongs to the glycosyltransferase group 1 family.

The catalysed reaction is ADP-alpha-D-glucose + alpha-D-glucose 1-phosphate = alpha-maltose 1-phosphate + ADP + H(+). It functions in the pathway capsule biogenesis; capsule polysaccharide biosynthesis. The protein operates within glycan biosynthesis; glycogen biosynthesis. In terms of biological role, involved in the biosynthesis of the maltose-1-phosphate (M1P) building block required for alpha-glucan production by the key enzyme GlgE. Catalyzes the formation of an alpha-1,4 linkage between glucose from ADP-glucose and glucose 1-phosphate (G1P) to yield maltose-1-phosphate (M1P). In Mycobacterium tuberculosis (strain CDC 1551 / Oshkosh), this protein is Alpha-maltose-1-phosphate synthase.